Here is a 186-residue protein sequence, read N- to C-terminus: UPF0301 protein Mmc1_0726 (186 aa).

It belongs to the UPF0301 (AlgH) family.

The protein is UPF0301 protein Mmc1_0726 of Magnetococcus marinus (strain ATCC BAA-1437 / JCM 17883 / MC-1).